We begin with the raw amino-acid sequence, 173 residues long: Ribosome maturation factor RimP (173 aa).

This sequence belongs to the RimP family.

The protein localises to the cytoplasm. In terms of biological role, required for maturation of 30S ribosomal subunits. This is Ribosome maturation factor RimP from Chlorobium phaeobacteroides (strain DSM 266 / SMG 266 / 2430).